We begin with the raw amino-acid sequence, 268 residues long: Adenosylcobinamide-GDP ribazoletransferase (268 aa).

The next 6 membrane-spanning stretches (helical) occupy residues 54–74 (IAGL…GVLW), 80–100 (AVVL…DGLS), 124–144 (IGVM…AFLA), 150–170 (WLTA…YGIV), 202–222 (ALAL…VWMV), and 243–263 (GALC…SAPM).

Belongs to the CobS family. Mg(2+) is required as a cofactor.

It is found in the cell membrane. The enzyme catalyses alpha-ribazole + adenosylcob(III)inamide-GDP = adenosylcob(III)alamin + GMP + H(+). The catalysed reaction is alpha-ribazole 5'-phosphate + adenosylcob(III)inamide-GDP = adenosylcob(III)alamin 5'-phosphate + GMP + H(+). The protein operates within cofactor biosynthesis; adenosylcobalamin biosynthesis; adenosylcobalamin from cob(II)yrinate a,c-diamide: step 7/7. Its function is as follows. Joins adenosylcobinamide-GDP and alpha-ribazole to generate adenosylcobalamin (Ado-cobalamin). Also synthesizes adenosylcobalamin 5'-phosphate from adenosylcobinamide-GDP and alpha-ribazole 5'-phosphate. This Roseiflexus sp. (strain RS-1) protein is Adenosylcobinamide-GDP ribazoletransferase.